Reading from the N-terminus, the 559-residue chain is 5-epiaristolochene synthase (559 aa).

Residues Asp312, Asp316, Asp455, Thr459, and Glu463 each contribute to the Mg(2+) site. Residues 312-316 (DDTYD) carry the DDXXD motif motif.

Belongs to the terpene synthase family. Monomer. The cofactor is Mg(2+). As to expression, expressed only in treated leaves an not detected in control leaves.

The protein localises to the cytoplasm. The catalysed reaction is (2E,6E)-farnesyl diphosphate = (+)-5-epi-aristolochene + diphosphate. It participates in secondary metabolite biosynthesis; terpenoid biosynthesis. Its function is as follows. Catalyzes the cyclization of trans,trans-farnesyl diphosphate (FPP) to the bicyclic intermediate 5-epi-aristolochene, initial step in the conversion of FPP to the sesquiterpenoid antifungal phytoalexin capsidiol. Produces germacrene A as an enzyme-bound intermediate that is not released by the enzyme, but is further cyclized to produce the bicyclic 5-epi-aristolochene. This is 5-epiaristolochene synthase (EAS) from Capsicum annuum (Capsicum pepper).